The primary structure comprises 149 residues: Urease accessory protein UreE (149 aa).

It belongs to the UreE family.

The protein resides in the cytoplasm. Functionally, involved in urease metallocenter assembly. Binds nickel. Probably functions as a nickel donor during metallocenter assembly. The protein is Urease accessory protein UreE of Prochlorococcus marinus (strain MIT 9312).